The chain runs to 163 residues: Lysosomal enzyme trafficking factor (163 aa).

The next 2 membrane-spanning stretches (helical) occupy residues 40–60 (MGWIGVGLYLLASAAAFYYVF) and 98–118 (LPFWFWTVVFLIPYLQMFLFL).

The protein belongs to the LYSET family. In terms of assembly, interacts with GNPTAB; this interaction is important for proper localization of GNPTAB in Golgi stacks. Interacts with MBTPS1.

The protein resides in the golgi apparatus membrane. Functionally, required for mannose-6-phosphate-dependent trafficking of lysosomal enzymes. LYSET bridges GlcNAc-1-phosphate transferase (GNPTAB), to the membrane-bound transcription factor site-1 protease (MBTPS1), thus allowing proteolytic activation of the GNPTAB. GNPTAB is involved in the regulation of M6P-dependent Golgi-to-lysosome trafficking of lysosomal enzymes. LYSET is thus an essential factor for maturation and delivery of lysosomal hydrolases. The chain is Lysosomal enzyme trafficking factor (LYSET) from Bos taurus (Bovine).